An 871-amino-acid chain; its full sequence is Dual O-methyltransferase/FAD-dependent monooxygenase CTB3 (871 aa).

The segment at 1-429 (MMQFQRDLEA…GLLTVRSAGQ (429 aa)) is O-methyltransferase. D279 contacts S-adenosyl-L-methionine. The Proton acceptor role is filled by H331. Residues 430 to 871 (TALSGTNTLT…NLVDCSEFVF (442 aa)) form an FAD-dependent monooxygenase region. Residues E485, R569, D793, and A806 each contribute to the FAD site.

It in the C-terminal section; belongs to the paxM FAD-dependent monooxygenase family. In the N-terminal section; belongs to the class I-like SAM-binding methyltransferase superfamily. Cation-independent O-methyltransferase family. COMT subfamily.

The enzyme catalyses nor-toralactone + S-adenosyl-L-methionine = toralactone + S-adenosyl-L-homocysteine + H(+). It carries out the reaction toralactone + NADH + O2 + H(+) = 1-(3,4,5-trihydroxy-7-methoxynaphthalen-2-yl)propan-2-one + CO2 + NAD(+). Its pathway is mycotoxin biosynthesis. Dual O-methyltransferase/FAD-dependent monooxygenase; part of the gene cluster that mediates the biosynthesis of cercosporin, a light-activated, non-host-selective toxin. The perylenequinone chromophore of cercosporin absorbs light energy to attain an electronically-activated triplet state and produces active oxygen species such as the hydroxyl radical, superoxide, hydrogen peroxide or singlet oxygen upon reaction with oxygen molecules. These reactive oxygen species cause damage to various cellular components including lipids, proteins and nucleic acids. The first step of cercosporin biosynthesis is performed by the polyketide synthase CTB1 which catalyzes the formation of nor-toralactone. The starter unit acyltransferase (SAT) domain of CTB1 initiates polyketide extension by the selective utilization of acetyl-CoA, which is elongated to the heptaketide in the beta-ketoacyl synthase (KS) domain by successive condensations with six malonyl units introduced by the malonyl acyltransferase (MAT) domain. The product template (PT) domain catalyzes C4-C9 and C2-C11 aldol cyclizations and dehydrations to a trihydroxynaphthalene, which is thought to be delivered to the thioesterase (TE) domain for product release. The bifunctional enzyme CTB3 then methylates nor-toralactone to toralactone before conducting an unusual oxidative aromatic ring opening. The O-methyltransferase CTB2 further methylates the nascent OH-6 of the CBT3 product, blocking further oxidation at this site before the reductase CTB6 reduces the 2-oxopropyl ketone at position C7, giving naphthalene. The FAD-dependent monooxygenase CTB5 in concert with the multicopper oxidase CTB12 are responsible for homodimerization of naphthalene with CTB7 installing the dioxepine moiety, finally producing cercosporin. The fasciclin domain-containing protein CTB11 might act with CTB5 and CTB12 whereas the roles of CTB9 and CTB10 have still to be elucidated. This chain is Dual O-methyltransferase/FAD-dependent monooxygenase CTB3, found in Cercospora beticola (Sugarbeet leaf spot fungus).